A 130-amino-acid chain; its full sequence is Small ribosomal subunit protein uS8A (130 aa).

The protein belongs to the universal ribosomal protein uS8 family. As to quaternary structure, component of the small ribosomal subunit (SSU). Mature ribosomes consist of a small (40S) and a large (60S) subunit. The 40S subunit contains about 32 different proteins and 1 molecule of RNA (18S). The 60S subunit contains 45 different proteins and 3 molecules of RNA (25S, 5.8S and 5S).

The protein resides in the cytoplasm. Component of the ribosome, a large ribonucleoprotein complex responsible for the synthesis of proteins in the cell. The small ribosomal subunit (SSU) binds messenger RNAs (mRNAs) and translates the encoded message by selecting cognate aminoacyl-transfer RNA (tRNA) molecules. The large subunit (LSU) contains the ribosomal catalytic site termed the peptidyl transferase center (PTC), which catalyzes the formation of peptide bonds, thereby polymerizing the amino acids delivered by tRNAs into a polypeptide chain. The nascent polypeptides leave the ribosome through a tunnel in the LSU and interact with protein factors that function in enzymatic processing, targeting, and the membrane insertion of nascent chains at the exit of the ribosomal tunnel. The sequence is that of Small ribosomal subunit protein uS8A (RPS22A) from Candida albicans (strain SC5314 / ATCC MYA-2876) (Yeast).